The primary structure comprises 167 residues: GTP-dependent dephospho-CoA kinase (167 aa).

Positions 39, 41, 58, 60, and 117 each coordinate GTP.

The protein belongs to the GTP-dependent DPCK family.

It catalyses the reaction 3'-dephospho-CoA + GTP = GDP + CoA + H(+). It participates in cofactor biosynthesis; coenzyme A biosynthesis. Functionally, catalyzes the GTP-dependent phosphorylation of the 3'-hydroxyl group of dephosphocoenzyme A to form coenzyme A (CoA). This chain is GTP-dependent dephospho-CoA kinase, found in Korarchaeum cryptofilum (strain OPF8).